Consider the following 133-residue polypeptide: ATP synthase epsilon chain, chloroplastic (133 aa).

It belongs to the ATPase epsilon chain family. In terms of assembly, F-type ATPases have 2 components, CF(1) - the catalytic core - and CF(0) - the membrane proton channel. CF(1) has five subunits: alpha(3), beta(3), gamma(1), delta(1), epsilon(1). CF(0) has three main subunits: a, b and c.

Its subcellular location is the plastid. It is found in the chloroplast thylakoid membrane. In terms of biological role, produces ATP from ADP in the presence of a proton gradient across the membrane. The chain is ATP synthase epsilon chain, chloroplastic from Zygnema circumcarinatum (Green alga).